Reading from the N-terminus, the 327-residue chain is GTP 3',8-cyclase (327 aa).

The Radical SAM core domain occupies 7–232 (HHDRQFRYLR…IKRDRTAGPA (226 aa)). Arginine 16 is a binding site for GTP. Positions 23 and 27 each coordinate [4Fe-4S] cluster. Tyrosine 29 is a binding site for S-adenosyl-L-methionine. [4Fe-4S] cluster is bound at residue cysteine 30. Arginine 66 contacts GTP. Position 70 (glycine 70) interacts with S-adenosyl-L-methionine. Threonine 97 lines the GTP pocket. Residue serine 121 coordinates S-adenosyl-L-methionine. Lysine 158 contributes to the GTP binding site. Methionine 192 is a binding site for S-adenosyl-L-methionine. Positions 255 and 258 each coordinate [4Fe-4S] cluster. 260–262 (RLR) is a GTP binding site. Residue cysteine 272 coordinates [4Fe-4S] cluster.

Belongs to the radical SAM superfamily. MoaA family. In terms of assembly, monomer and homodimer. It depends on [4Fe-4S] cluster as a cofactor.

The enzyme catalyses GTP + AH2 + S-adenosyl-L-methionine = (8S)-3',8-cyclo-7,8-dihydroguanosine 5'-triphosphate + 5'-deoxyadenosine + L-methionine + A + H(+). Its pathway is cofactor biosynthesis; molybdopterin biosynthesis. In terms of biological role, catalyzes the cyclization of GTP to (8S)-3',8-cyclo-7,8-dihydroguanosine 5'-triphosphate. The polypeptide is GTP 3',8-cyclase (Synechococcus elongatus (strain ATCC 33912 / PCC 7942 / FACHB-805) (Anacystis nidulans R2)).